We begin with the raw amino-acid sequence, 130 residues long: Small ribosomal subunit protein uS9 (130 aa).

This sequence belongs to the universal ribosomal protein uS9 family.

In Salmonella paratyphi C (strain RKS4594), this protein is Small ribosomal subunit protein uS9.